The primary structure comprises 486 residues: Cardiolipin synthase A (486 aa).

The next 2 membrane-spanning stretches (helical) occupy residues 3 to 23 (IFYD…IANI) and 38 to 58 (MSWL…WFFF). PLD phosphodiesterase domains lie at 219–246 (LDVR…VDPY) and 399–426 (KKGL…DMRS). Catalysis depends on residues His224, Lys226, Asp231, His404, Lys406, and Asp411.

It belongs to the phospholipase D family. Cardiolipin synthase subfamily. ClsA sub-subfamily.

The protein localises to the cell inner membrane. The catalysed reaction is 2 a 1,2-diacyl-sn-glycero-3-phospho-(1'-sn-glycerol) = a cardiolipin + glycerol. In terms of biological role, catalyzes the reversible phosphatidyl group transfer from one phosphatidylglycerol molecule to another to form cardiolipin (CL) (diphosphatidylglycerol) and glycerol. In Buchnera aphidicola subsp. Schizaphis graminum (strain Sg), this protein is Cardiolipin synthase A.